The primary structure comprises 397 residues: Succinate--CoA ligase [ADP-forming] subunit beta (397 aa).

The 246-residue stretch at 9–254 (KALLAQYGAP…ETEEDPKELA (246 aa)) folds into the ATP-grasp domain. Residues K46, 53–55 (GRG), E109, S112, and E117 contribute to the ATP site. The Mg(2+) site is built by N209 and D223. Substrate-binding positions include N274 and 331–333 (GIM).

It belongs to the succinate/malate CoA ligase beta subunit family. In terms of assembly, heterotetramer of two alpha and two beta subunits. Mg(2+) is required as a cofactor.

It catalyses the reaction succinate + ATP + CoA = succinyl-CoA + ADP + phosphate. It carries out the reaction GTP + succinate + CoA = succinyl-CoA + GDP + phosphate. The protein operates within carbohydrate metabolism; tricarboxylic acid cycle; succinate from succinyl-CoA (ligase route): step 1/1. In terms of biological role, succinyl-CoA synthetase functions in the citric acid cycle (TCA), coupling the hydrolysis of succinyl-CoA to the synthesis of either ATP or GTP and thus represents the only step of substrate-level phosphorylation in the TCA. The beta subunit provides nucleotide specificity of the enzyme and binds the substrate succinate, while the binding sites for coenzyme A and phosphate are found in the alpha subunit. The sequence is that of Succinate--CoA ligase [ADP-forming] subunit beta from Jannaschia sp. (strain CCS1).